We begin with the raw amino-acid sequence, 953 residues long: Serine/threonine-protein kinase ppk30 (953 aa).

The region spanning 57 to 326 (VIIQRYLSEG…IYQTLKEIME (270 aa)) is the Protein kinase domain. Residues 63–71 (LSEGGFSHV) and K85 each bind ATP. The active-site Proton acceptor is the D187. Disordered regions lie at residues 343–402 (ASTY…PSVS), 427–451 (SPIP…RRAD), 538–606 (RFLP…NRMN), 641–669 (RKEP…NKDV), 748–791 (STSQ…RPIG), and 864–953 (RKSC…ESLE). Composition is skewed to polar residues over residues 355 to 369 (RTPS…SRPA), 378 to 402 (TVQT…PSVS), and 433 to 444 (KSYSATIQTPRS). The segment covering 547–557 (PSEFSSSVGSK) has biased composition (low complexity). The segment covering 558 to 575 (QNLSMDIPSVQNVSTKQK) has biased composition (polar residues). Positions 656–669 (LKKDQSSEVANKDV) are enriched in basic and acidic residues. A compositionally biased stretch (polar residues) spans 748-766 (STSQVSHTQRLQQSISTSL). Basic and acidic residues-rich tracts occupy residues 767-778 (ERVKSNTKKESN), 865-884 (KSCE…DLER), and 937-953 (PHIE…ESLE). Residues S872 and S875 each carry the phosphoserine modification.

Belongs to the protein kinase superfamily. Ser/Thr protein kinase family.

It localises to the cytoplasm. It carries out the reaction L-seryl-[protein] + ATP = O-phospho-L-seryl-[protein] + ADP + H(+). The catalysed reaction is L-threonyl-[protein] + ATP = O-phospho-L-threonyl-[protein] + ADP + H(+). The sequence is that of Serine/threonine-protein kinase ppk30 (ppk30) from Schizosaccharomyces pombe (strain 972 / ATCC 24843) (Fission yeast).